We begin with the raw amino-acid sequence, 97 residues long: Aspartyl/glutamyl-tRNA(Asn/Gln) amidotransferase subunit C (97 aa).

It belongs to the GatC family. Heterotrimer of A, B and C subunits.

It carries out the reaction L-glutamyl-tRNA(Gln) + L-glutamine + ATP + H2O = L-glutaminyl-tRNA(Gln) + L-glutamate + ADP + phosphate + H(+). The enzyme catalyses L-aspartyl-tRNA(Asn) + L-glutamine + ATP + H2O = L-asparaginyl-tRNA(Asn) + L-glutamate + ADP + phosphate + 2 H(+). In terms of biological role, allows the formation of correctly charged Asn-tRNA(Asn) or Gln-tRNA(Gln) through the transamidation of misacylated Asp-tRNA(Asn) or Glu-tRNA(Gln) in organisms which lack either or both of asparaginyl-tRNA or glutaminyl-tRNA synthetases. The reaction takes place in the presence of glutamine and ATP through an activated phospho-Asp-tRNA(Asn) or phospho-Glu-tRNA(Gln). The sequence is that of Aspartyl/glutamyl-tRNA(Asn/Gln) amidotransferase subunit C from Prochlorococcus marinus (strain MIT 9301).